The sequence spans 429 residues: UDP-N-acetylglucosamine 1-carboxyvinyltransferase (429 aa).

22–23 (KN) lines the phosphoenolpyruvate pocket. Arg-102 lines the UDP-N-acetyl-alpha-D-glucosamine pocket. Residue Cys-126 is the Proton donor of the active site. Cys-126 is subject to 2-(S-cysteinyl)pyruvic acid O-phosphothioketal. Residues 131 to 135 (RPVDL), Asp-316, and Ile-338 contribute to the UDP-N-acetyl-alpha-D-glucosamine site.

The protein belongs to the EPSP synthase family. MurA subfamily.

It is found in the cytoplasm. It carries out the reaction phosphoenolpyruvate + UDP-N-acetyl-alpha-D-glucosamine = UDP-N-acetyl-3-O-(1-carboxyvinyl)-alpha-D-glucosamine + phosphate. The protein operates within cell wall biogenesis; peptidoglycan biosynthesis. In terms of biological role, cell wall formation. Adds enolpyruvyl to UDP-N-acetylglucosamine. The protein is UDP-N-acetylglucosamine 1-carboxyvinyltransferase of Methylobacterium radiotolerans (strain ATCC 27329 / DSM 1819 / JCM 2831 / NBRC 15690 / NCIMB 10815 / 0-1).